We begin with the raw amino-acid sequence, 296 residues long: NAD kinase (296 aa).

Asp72 serves as the catalytic Proton acceptor. Residues 72 to 73 (DG), 146 to 147 (ND), Arg157, Lys174, Asp176, 187 to 192 (TAYALS), and Gln247 each bind NAD(+).

This sequence belongs to the NAD kinase family. It depends on a divalent metal cation as a cofactor.

Its subcellular location is the cytoplasm. The enzyme catalyses NAD(+) + ATP = ADP + NADP(+) + H(+). Functionally, involved in the regulation of the intracellular balance of NAD and NADP, and is a key enzyme in the biosynthesis of NADP. Catalyzes specifically the phosphorylation on 2'-hydroxyl of the adenosine moiety of NAD to yield NADP. This chain is NAD kinase, found in Pseudomonas savastanoi pv. phaseolicola (strain 1448A / Race 6) (Pseudomonas syringae pv. phaseolicola (strain 1448A / Race 6)).